A 407-amino-acid polypeptide reads, in one-letter code: Putative nickel insertion protein (407 aa).

This sequence belongs to the LarC family.

The sequence is that of Putative nickel insertion protein from Gloeothece citriformis (strain PCC 7424) (Cyanothece sp. (strain PCC 7424)).